A 551-amino-acid polypeptide reads, in one-letter code: Nucleobase-ascorbate transporter 3 (551 aa).

Residues 1 to 30 (MVETGHHHQHPPAPAAAGHPPVPSMAMARN) form a disordered region. A run of 12 helical transmembrane segments spans residues 56–76 (ETVVLAFQHYIVMLGTTVLIA), 92–111 (RVIQTILFMSGINTLLQTLI), 117–136 (TVMGVSFAYVLPVLSIIRDY), 158–178 (SLIISSFVNIIIGYGQAWGNL), 179–199 (IRIFSPIIVVPVVSVVSLGLF), 202–222 (GFPLLANCVEIGLPMLILLII), 242–262 (ALLVCLAIIWAFAAILTVSGA), 306–326 (VFGMFGAAIVASAESTGVFFA), 390–410 (FFMIFFSIFGKFGAFFASIPL), 412–432 (IFAGVYCILLGIVVAVGISFI), 442–462 (NMYVIGVSLFLSLSIAQYFLA), and 481–501 (DILNTIFASAPLVATILATIL).

The protein belongs to the nucleobase:cation symporter-2 (NCS2) (TC 2.A.40) family. As to expression, expressed in the apical meristem 4 days after imbibition (DAI). Expressed in the major veins of rosette leaves and pedicels. Expressed in the root central cylinder, root meristems, root tips and lateral root primordia.

It is found in the membrane. The polypeptide is Nucleobase-ascorbate transporter 3 (NAT3) (Arabidopsis thaliana (Mouse-ear cress)).